The following is a 297-amino-acid chain: N-acetylmuramic acid 6-phosphate etherase (297 aa).

The SIS domain maps to 55-218 (AAAALTRGGR…STGAMVKCGK (164 aa)). Glutamate 83 functions as the Proton donor in the catalytic mechanism. Glutamate 114 is an active-site residue.

It belongs to the GCKR-like family. MurNAc-6-P etherase subfamily. Homodimer.

It carries out the reaction N-acetyl-D-muramate 6-phosphate + H2O = N-acetyl-D-glucosamine 6-phosphate + (R)-lactate. Its pathway is amino-sugar metabolism; 1,6-anhydro-N-acetylmuramate degradation. The protein operates within amino-sugar metabolism; N-acetylmuramate degradation. It functions in the pathway cell wall biogenesis; peptidoglycan recycling. Its function is as follows. Specifically catalyzes the cleavage of the D-lactyl ether substituent of MurNAc 6-phosphate, producing GlcNAc 6-phosphate and D-lactate. Together with AnmK, is also required for the utilization of anhydro-N-acetylmuramic acid (anhMurNAc) either imported from the medium or derived from its own cell wall murein, and thus plays a role in cell wall recycling. The chain is N-acetylmuramic acid 6-phosphate etherase from Cronobacter sakazakii (strain ATCC BAA-894) (Enterobacter sakazakii).